The chain runs to 359 residues: Type-1 angiotensin II receptor B (359 aa).

Topologically, residues 1 to 25 are extracellular; sequence MILNSSIEDGIKRIQDDCPKAGRHN. Asn-4 carries an N-linked (GlcNAc...) asparagine glycan. Residues Gln-15 and Asp-17 each coordinate angiotensin II. Disulfide bonds link Cys-18/Cys-274 and Cys-101/Cys-180. Residues 26–55 form a helical membrane-spanning segment; sequence YIFVMIPTLYSIIFVVGIFGNSLVVIVIYF. Residues 56–61 lie on the Cytoplasmic side of the membrane; that stretch reads YMKLKT. The helical transmembrane segment at 62–89 threads the bilayer; the sequence is VASVFLLNLALADLCFLLTLPLWAVYTA. Topologically, residues 90–98 are extracellular; the sequence is MEYQWPFGN. Residues 99 to 125 form a helical membrane-spanning segment; sequence HLCKIASASVSFNLYASVFLLTCLSID. The Cytoplasmic segment spans residues 126 to 141; that stretch reads RYLAIVHPMKSRLRRT. A helical transmembrane segment spans residues 142–165; that stretch reads MLVAKVTCIIIWLMAGLASLPAVI. The Extracellular portion of the chain corresponds to 166 to 190; the sequence is HRNVYFIENTNITVCAFHYESQNST. Angiotensin II is bound at residue Arg-167. The N-linked (GlcNAc...) asparagine glycan is linked to Asn-176. 3 residues coordinate angiotensin II: Phe-182, His-183, and Tyr-184. Asn-188 carries N-linked (GlcNAc...) asparagine glycosylation. Residues 191-216 form a helical membrane-spanning segment; that stretch reads LPIGLGLTKNILGFVFPFVIILTSYT. Position 199 (Lys-199) interacts with angiotensin II. At 217 to 239 the chain is on the cytoplasmic side; sequence LIWKALKKAYKIQKNTPRNDDIF. Residues 240–268 traverse the membrane as a helical segment; it reads RIIMAIVLFFFFSWVPHQIFSFLDVLIQL. The Extracellular portion of the chain corresponds to 269 to 278; sequence GVIHDCEIAD. A helical membrane pass occupies residues 279 to 304; the sequence is VVDTAMPITICIAYFNNCLNPLFYGF. Residues 305-359 lie on the Cytoplasmic side of the membrane; that stretch reads LGKKFKRYFLQLLKYIPPKARSHAGLSTKMSTLSYRPSDNMSSSARKSAYCFEVE. The S-palmitoyl cysteine moiety is linked to residue Cys-355.

The protein belongs to the G-protein coupled receptor 1 family. Interacts with MAS1. Interacts with ARRB1. Interacts with FLNA (via filamin repeat 21); increases PKA-mediated phosphorylation of FLNA. Post-translationally, C-terminal Ser or Thr residues may be phosphorylated.

It localises to the cell membrane. Functionally, receptor for angiotensin II, a vasoconstricting peptide, which acts as a key regulator of blood pressure and sodium retention by the kidney. The activated receptor in turn couples to G-alpha proteins G(q) (GNAQ, GNA11, GNA14 or GNA15) and thus activates phospholipase C and increases the cytosolic Ca(2+) concentrations, which in turn triggers cellular responses such as stimulation of protein kinase C. The sequence is that of Type-1 angiotensin II receptor B (Agtr1b) from Mus musculus (Mouse).